Reading from the N-terminus, the 89-residue chain is uncharacterized protein (89 aa).

This is an uncharacterized protein from Methanocaldococcus jannaschii (strain ATCC 43067 / DSM 2661 / JAL-1 / JCM 10045 / NBRC 100440) (Methanococcus jannaschii).